Consider the following 468-residue polypeptide: Glucose transport protein (468 aa).

Residues 1-17 lie on the Cytoplasmic side of the membrane; sequence MNPSSSPSQSTANVKFV. The helical transmembrane segment at 18-38 threads the bilayer; the sequence is LLISGVAALGGFLFGFDTAVI. Residues 39 to 58 are Extracellular-facing; the sequence is NGAVAALQKHFQTDSLLTGL. The chain crosses the membrane as a helical span at residues 59 to 78; sequence SVSLALLGSALGAFGAGPIA. The Cytoplasmic segment spans residues 79 to 84; the sequence is DRHGRI. Residues 85–105 traverse the membrane as a helical segment; the sequence is KTMILAAVLFTLSSIGSGLPF. Residues 106–114 lie on the Extracellular side of the membrane; it reads TIWDFIFWR. The helical transmembrane segment at 115–135 threads the bilayer; the sequence is VLGGIGVGAASVIAPAYIAEV. Residues 136–149 are Cytoplasmic-facing; sequence SPAHLRGRLGSLQQ. The chain crosses the membrane as a helical span at residues 150–170; sequence LAIVSGIFIALLSNWFIALMA. The Extracellular segment spans residues 171-186; the sequence is GGSAQNPWLFGAAAWR. A helical transmembrane segment spans residues 187 to 207; that stretch reads WMFWTELIPALLYGVCAFLIP. Topologically, residues 208 to 265 are cytoplasmic; it reads ESPRYLVAQGQGEKAAAILWKVEGGDVPSRIEEIQATVSLDHKPRFSDLLSRRGGLLP. A helical membrane pass occupies residues 266-286; the sequence is IVWIGMGLSALQQFVGINVIF. Over 287-307 the chain is Extracellular; that stretch reads YYSSVLWRSVGFTEEKSLLIT. Residues 308–328 form a helical membrane-spanning segment; it reads VITGFINILTTLVAIAFVDKF. Over 329-331 the chain is Cytoplasmic; sequence GRK. Residues 332–352 traverse the membrane as a helical segment; that stretch reads PLLLMGSIGMTITLGILSVVF. Over 353–366 the chain is Extracellular; sequence GGATVVNGQPTLTG. A helical membrane pass occupies residues 367–387; that stretch reads AAGIIALVTANLYVFSFGFSW. The Cytoplasmic portion of the chain corresponds to 388–412; that stretch reads GPIVWVLLGEMFNNKIRAAALSVAA. Residues 413 to 433 traverse the membrane as a helical segment; it reads GVQWIANFIISTTFPPLLDTV. Topologically, residues 434 to 436 are extracellular; sequence GLG. A helical transmembrane segment spans residues 437-457; that stretch reads PAYGLYATSAAISIFFIWFFV. At 458–468 the chain is on the cytoplasmic side; the sequence is KETKGKTLEQM.

It belongs to the major facilitator superfamily. Sugar transporter (TC 2.A.1.1) family.

The protein resides in the cell membrane. The protein is Glucose transport protein (gtr) of Synechocystis sp. (strain ATCC 27184 / PCC 6803 / Kazusa).